Consider the following 362-residue polypeptide: Divinyl chlorophyll a/b light-harvesting protein PcbF (362 aa).

The next 6 membrane-spanning stretches (helical) occupy residues 27–47, 89–109, 150–170, 211–231, 251–271, and 316–336; these read FIGS…ANTL, IAFI…AGLL, FILG…VEWA, VMGG…FHIA, AVLS…AFWC, and LANV…WHAI.

The protein belongs to the PsbB/PsbC family. IsiA/Pcb subfamily. As to quaternary structure, the antenna complex consists of divinyl chlorophylls (a and b) and divinyl chlorophyll a/b binding proteins and binds more divinyl chlorophyll b than does the antenna complex from high-light-adapted Prochlorococcus. It depends on divinyl chlorophyll a as a cofactor. Divinyl chlorophyll b is required as a cofactor.

Its subcellular location is the cellular thylakoid membrane. The antenna complex functions as a light receptor, it captures and delivers excitation energy to photosystems II and I. The Prochlorales pcb genes are not related to higher plant LHCs. This chain is Divinyl chlorophyll a/b light-harvesting protein PcbF (pcbF), found in Prochlorococcus marinus (strain NATL2A).